The sequence spans 424 residues: MKLEMICTGEEVLAGQIVDTNAAWFANTMMDQGIECQRRVTVGDRLEDLISVFRERSLEADIILVNGGLGPTSDDLSTEAMALAKGETLVENSIWRQRLEDWFARSGRVMAESNLKQALLPESAIMIDNPVGTACGFAVKFNRAWLFFTPGVPFEFKQMVHEQFIPFVKQRFDVSGDVALRKYLTLGQGESSLADTLDKIELPEGMTIGYRSSMPHIEIKLFARGIGAIDQLDTIETQIRLLLGNAIVADNKMSLAEEIHALLVDSDLSLSVAESCTGGMIVSQLISFSGSSSYLHQGLVTYCNESKVKVLGVKPETLDVHGAVSIATVEEMAKGARAILDSDFGLATSGIAGPTGGTDNKPVGTVAIALATKEGVYSQMIKLPRRSRDLVRSLSTAVAFDMLRRELLGQAVIVDYGSIGRFEK.

The protein belongs to the CinA family.

This is CinA-like protein from Shewanella halifaxensis (strain HAW-EB4).